The following is a 336-amino-acid chain: Nicotinate-nucleotide--dimethylbenzimidazole phosphoribosyltransferase (336 aa).

The tract at residues 20 to 41 is disordered; it reads GPDAAARAGAEERNGQLTKPPG. The Proton acceptor role is filled by E304.

Belongs to the CobT family.

The enzyme catalyses 5,6-dimethylbenzimidazole + nicotinate beta-D-ribonucleotide = alpha-ribazole 5'-phosphate + nicotinate + H(+). It functions in the pathway nucleoside biosynthesis; alpha-ribazole biosynthesis; alpha-ribazole from 5,6-dimethylbenzimidazole: step 1/2. Its function is as follows. Catalyzes the synthesis of alpha-ribazole-5'-phosphate from nicotinate mononucleotide (NAMN) and 5,6-dimethylbenzimidazole (DMB). The protein is Nicotinate-nucleotide--dimethylbenzimidazole phosphoribosyltransferase of Ruegeria pomeroyi (strain ATCC 700808 / DSM 15171 / DSS-3) (Silicibacter pomeroyi).